The primary structure comprises 510 residues: Light-independent protochlorophyllide reductase subunit B (510 aa).

Residue aspartate 36 coordinates [4Fe-4S] cluster. Aspartate 296 serves as the catalytic Proton donor. Substrate is bound at residue 431 to 432 (GM).

It belongs to the ChlB/BchB/BchZ family. In terms of assembly, protochlorophyllide reductase is composed of three subunits; ChlL, ChlN and ChlB. Forms a heterotetramer of two ChlB and two ChlN subunits. It depends on [4Fe-4S] cluster as a cofactor.

The protein resides in the plastid. Its subcellular location is the chloroplast. It catalyses the reaction chlorophyllide a + oxidized 2[4Fe-4S]-[ferredoxin] + 2 ADP + 2 phosphate = protochlorophyllide a + reduced 2[4Fe-4S]-[ferredoxin] + 2 ATP + 2 H2O. Its pathway is porphyrin-containing compound metabolism; chlorophyll biosynthesis (light-independent). Component of the dark-operative protochlorophyllide reductase (DPOR) that uses Mg-ATP and reduced ferredoxin to reduce ring D of protochlorophyllide (Pchlide) to form chlorophyllide a (Chlide). This reaction is light-independent. The NB-protein (ChlN-ChlB) is the catalytic component of the complex. In Chlorokybus atmophyticus (Soil alga), this protein is Light-independent protochlorophyllide reductase subunit B.